The sequence spans 114 residues: UPF0757 protein YmgG (114 aa).

The protein belongs to the UPF0757 family.

The sequence is that of UPF0757 protein YmgG from Edwardsiella ictaluri (strain 93-146).